The chain runs to 535 residues: Putative beta-glucosidase 41 (535 aa).

An N-terminal signal peptide occupies residues 1–27; sequence MESLMRLVLVLFPFFVVFFVPLDHVSS. Gln-49 serves as a coordination point for a beta-D-glucoside. Asn-118 carries N-linked (GlcNAc...) asparagine glycosylation. A beta-D-glucoside contacts are provided by residues His-151 and 196 to 197; that span reads NE. The Proton donor role is filled by Glu-197. Cys-216 and Cys-224 are oxidised to a cystine. Tyr-340 and Glu-413 together coordinate a beta-D-glucoside. Catalysis depends on Glu-413, which acts as the Nucleophile. Asn-445 carries N-linked (GlcNAc...) asparagine glycosylation. A beta-D-glucoside contacts are provided by residues Trp-463, 470–471, and Phe-479; that span reads EW. An N-linked (GlcNAc...) asparagine glycan is attached at Asn-489.

The protein belongs to the glycosyl hydrolase 1 family.

The enzyme catalyses Hydrolysis of terminal, non-reducing beta-D-glucosyl residues with release of beta-D-glucose.. The protein is Putative beta-glucosidase 41 of Arabidopsis thaliana (Mouse-ear cress).